The chain runs to 364 residues: MKGLILVGGYGTRLRPLTLSVPKPLVEFANKPMIVHQIEALVAAGVTDIVLAVNYRPEVMEKFLAEYEEKFGINIEFSVETEPLDTAGPLKLAERILAKDDSPFFVLNSDVICDFPFEDLLAFHKSHGNEGTIVVTKVEEPSKYGVVVHQPGHRSLIDRFVEKPVEFVGNRINAGLYIFNTSILDRIELRPTSIEKETFPAMVKDNQLHSFDLEGFWMDVGQPKDFLSGTCLYLSSLTKKGSKELTSPSEPFVHGGNVLIDPSAKIGKNCRIGPNVTIGPNVVIGDGVRLQRCVLLKGSKVKDHAWVKSTIVGWNSTIGRWARLENVTVLGDDVTVGDEIYVNGGSVLPHKSIKANVDIPAIIM.

Belongs to the transferase hexapeptide repeat family.

It localises to the cytoplasm. The enzyme catalyses alpha-D-mannose 1-phosphate + GTP + H(+) = GDP-alpha-D-mannose + diphosphate. The protein operates within nucleotide-sugar biosynthesis; GDP-alpha-D-mannose biosynthesis; GDP-alpha-D-mannose from alpha-D-mannose 1-phosphate (GTP route): step 1/1. Its function is as follows. Involved in cell wall synthesis where it is required for glycosylation. Involved in cell cycle progression through cell-size checkpoint. The protein is Mannose-1-phosphate guanyltransferase (MPG1) of Gibberella zeae (strain ATCC MYA-4620 / CBS 123657 / FGSC 9075 / NRRL 31084 / PH-1) (Wheat head blight fungus).